Reading from the N-terminus, the 147-residue chain is Hemoglobin subunit beta (147 aa).

Valine 2 bears the N-acetylvaline mark. The Globin domain maps to 3–147 (HLTGEEKSAV…VANALAHKYH (145 aa)). Position 13 is a phosphothreonine (threonine 13). Serine 45 is subject to Phosphoserine. Lysine 60 bears the N6-acetyllysine mark. Histidine 64 is a binding site for heme b. At lysine 83 the chain carries N6-acetyllysine. Histidine 93 serves as a coordination point for heme b. S-nitrosocysteine is present on cysteine 94. N6-acetyllysine is present on lysine 145.

The protein belongs to the globin family. As to quaternary structure, heterotetramer of two alpha chains and two beta chains. Red blood cells.

Functionally, involved in oxygen transport from the lung to the various peripheral tissues. The protein is Hemoglobin subunit beta (HBB) of Callimico goeldii (Goeldi's marmoset).